Consider the following 422-residue polypeptide: Electron transfer flavoprotein subunit alpha (422 aa).

Residues 61-80 (KRIDRSGTQQGAGGGKASAS) are disordered. Residues 329 to 330 (SR), 343 to 347 (QVGAT), 360 to 367 (GISGAIQH), and Asn-381 contribute to the FAD site.

The protein belongs to the ETF alpha-subunit/FixB family. Heterodimer of an alpha and a beta subunit. Requires FAD as cofactor.

Participates in the electron transfer process during N,N-dimethylglycine (DMG) degradation to sarcosine. This chain is Electron transfer flavoprotein subunit alpha, found in Chromohalobacter salexigens (strain ATCC BAA-138 / DSM 3043 / CIP 106854 / NCIMB 13768 / 1H11).